A 217-amino-acid polypeptide reads, in one-letter code: Lipid A acyltransferase PagP (217 aa).

The signal sequence occupies residues 1 to 24 (MYLKRILITLSLITLPIVPCLSYA). Residues histidine 89, aspartate 132, and serine 133 contribute to the active site.

Belongs to the lipid A palmitoyltransferase family. Homodimer.

Its subcellular location is the cell outer membrane. It carries out the reaction a lipid A + a 1,2-diacyl-sn-glycero-3-phosphocholine = a hepta-acyl lipid A + a 2-acyl-sn-glycero-3-phosphocholine. It catalyses the reaction a lipid IVA + a 1,2-diacyl-sn-glycero-3-phosphocholine = a lipid IVB + a 2-acyl-sn-glycero-3-phosphocholine. The enzyme catalyses a lipid IIA + a 1,2-diacyl-sn-glycero-3-phosphocholine = a lipid IIB + a 2-acyl-sn-glycero-3-phosphocholine. Transfers a fatty acid residue from the sn-1 position of a phospholipid to the N-linked hydroxyfatty acid chain on the proximal unit of lipid A or its precursors. In Pectobacterium atrosepticum (strain SCRI 1043 / ATCC BAA-672) (Erwinia carotovora subsp. atroseptica), this protein is Lipid A acyltransferase PagP.